The primary structure comprises 381 residues: CCN family member 1 (381 aa).

Residues 1 to 24 (MSSRIARALALVVTLLHLTRLALS) form the signal peptide. In terms of domain architecture, IGFBP N-terminal spans 25–94 (TCPAACHCPL…TALKGICRAQ (70 aa)). Disulfide bonds link Cys-26-Cys-50, Cys-30-Cys-52, Cys-32-Cys-53, Cys-39-Cys-56, Cys-64-Cys-78, and Cys-70-Cys-91. Residues 98-164 (RPCEYNSRIY…GQCCEEWVCD (67 aa)) enclose the VWFC domain. Ser-188 carries the post-translational modification Phosphoserine; by FAM20C. The region spanning 228-273 (KCIVQTTSWSQCSKTCGTGISTRVTNDNPECRLVKETRICEVRPCG) is the TSP type-1 domain. Positions 279 to 315 (SLKKGKKCSKTKKSPEPVRFTYAGCLSVKKYRPKYCG) are heparin-binding. 5 disulfides stabilise this stretch: Cys-286–Cys-323, Cys-303–Cys-337, Cys-314–Cys-353, Cys-317–Cys-355, and Cys-322–Cys-359. Residues 286–360 (CSKTKKSPEP…QSCKCNYNCP (75 aa)) form the CTCK domain.

It belongs to the CCN family. In terms of assembly, interaction with integrins is heparin- and cell-type-dependent and promotes cell adhesion. In skin fibroblasts it binds ITGA6/ITGB1, in endothelial cells, binds ITGAV/ITGB3 and in platelets, ITGA2B/ITGB3. Binds, in vitro, ITGAV/ITGB5.

The protein resides in the secreted. Functionally, promotes cell proliferation, chemotaxis, angiogenesis and cell adhesion. Appears to play a role in wound healing by up-regulating, in skin fibroblasts, the expression of a number of genes involved in angiogenesis, inflammation and matrix remodeling including VEGA-A, VEGA-C, MMP1, MMP3, TIMP1, uPA, PAI-1 and integrins alpha-3 and alpha-5. CCN1-mediated gene regulation is dependent on heparin-binding. Down-regulates the expression of alpha-1 and alpha-2 subunits of collagen type-1. Promotes cell adhesion and adhesive signaling through integrin alpha-6/beta-1, cell migration through integrin alpha-v/beta-5 and cell proliferation through integrin alpha-v/beta-3. The sequence is that of CCN family member 1 from Homo sapiens (Human).